We begin with the raw amino-acid sequence, 237 residues long: 1-(5-phosphoribosyl)-5-[(5-phosphoribosylamino)methylideneamino] imidazole-4-carboxamide isomerase (237 aa).

Asp8 acts as the Proton acceptor in catalysis. Asp127 (proton donor) is an active-site residue.

The protein belongs to the HisA/HisF family.

The protein localises to the cytoplasm. The catalysed reaction is 1-(5-phospho-beta-D-ribosyl)-5-[(5-phospho-beta-D-ribosylamino)methylideneamino]imidazole-4-carboxamide = 5-[(5-phospho-1-deoxy-D-ribulos-1-ylimino)methylamino]-1-(5-phospho-beta-D-ribosyl)imidazole-4-carboxamide. Its pathway is amino-acid biosynthesis; L-histidine biosynthesis; L-histidine from 5-phospho-alpha-D-ribose 1-diphosphate: step 4/9. The chain is 1-(5-phosphoribosyl)-5-[(5-phosphoribosylamino)methylideneamino] imidazole-4-carboxamide isomerase from Sulfurovum sp. (strain NBC37-1).